The sequence spans 490 residues: GTPase Der (490 aa).

2 EngA-type G domains span residues 3-166 (PVIA…PRDD) and 196-369 (IKIA…KSAV). Residues 9–16 (GRPNVGKS), 56–60 (DTGGI), and 118–121 (NKVD) each bind GTP. The tract at residues 162-189 (FPRDDDEPAEGEEEEVVAEGEEAKRIPG) is disordered. Acidic residues predominate over residues 164–181 (RDDDEPAEGEEEEVVAEG). GTP-binding positions include 202 to 209 (GRPNVGKS), 249 to 253 (DTAGV), and 314 to 317 (NKWD). The KH-like domain occupies 370–454 (TRWPTSRLTQ…PIRIEFKGGE (85 aa)). The tract at residues 453 to 490 (GENPYEGNKNTLTDRQVNKKRRLMSHNKKASKKRRDKK) is disordered. Over residues 470–490 (NKKRRLMSHNKKASKKRRDKK) the composition is skewed to basic residues.

This sequence belongs to the TRAFAC class TrmE-Era-EngA-EngB-Septin-like GTPase superfamily. EngA (Der) GTPase family. In terms of assembly, associates with the 50S ribosomal subunit.

GTPase that plays an essential role in the late steps of ribosome biogenesis. This is GTPase Der from Pseudomonas fluorescens (strain Pf0-1).